A 361-amino-acid chain; its full sequence is MKDSVIRKLEGLLERNEEVLALLSDAGIIADQERFRALSKEYSQLEDVVKAFKSFQQAEEDLESAKEMMEEDDAELKEMAQEEYKAAKETIETLESELQILLLPKDPNDDNNCFIEIRAGAGGDEAAIFAGDLFRMYSKYAESNRWQIEVMNTNEGEHGGFKEVIAKISGEGVYGKLKFESGGHRVQRVPETESQGRVHTSACTVIVLPEIPEAEAIEINKADLKVDTFRASGAGGQHVNKTDSAIRITHIPTGIVVECQDQRSQHKNRAQAMSVLSARIQAVEDEKRRSEEDSTRRNLVSSGDRSERIRTYNFPQGRVSEHRINLTLYRLGEFMEGDIDVVIEPLIQETQADMLAALGEG.

Residue Q237 is modified to N5-methylglutamine. The segment covering 284–296 has biased composition (basic and acidic residues); the sequence is EDEKRRSEEDSTR. A disordered region spans residues 284–305; it reads EDEKRRSEEDSTRRNLVSSGDR.

It belongs to the prokaryotic/mitochondrial release factor family. In terms of processing, methylated by PrmC. Methylation increases the termination efficiency of RF1.

The protein resides in the cytoplasm. Its function is as follows. Peptide chain release factor 1 directs the termination of translation in response to the peptide chain termination codons UAG and UAA. This is Peptide chain release factor 1 from Shewanella piezotolerans (strain WP3 / JCM 13877).